Here is a 120-residue protein sequence, read N- to C-terminus: MKRLLSLLTGVLVMTGLLMALIFPQSAYANVSDDKLGDRGEKVDLNNSSVRAFRQFPGMFPTIAGKIVVGGPYASVSDASSVLDASQKSVFDKYKDNFTVTDQEIAVNEGFDRINDGQYR.

The signal sequence occupies residues 1 to 29; sequence MKRLLSLLTGVLVMTGLLMALIFPQSAYA.

Belongs to the PsbU family. PSII is composed of 1 copy each of membrane proteins PsbA, PsbB, PsbC, PsbD, PsbE, PsbF, PsbH, PsbI, PsbJ, PsbK, PsbL, PsbM, PsbT, PsbX, PsbY, Psb30/Ycf12, peripheral proteins PsbO, CyanoQ (PsbQ), PsbU, PsbV and a large number of cofactors. It forms dimeric complexes.

Its subcellular location is the cellular thylakoid membrane. Its function is as follows. One of the extrinsic, lumenal subunits of photosystem II (PSII). PSII is a light-driven water plastoquinone oxidoreductase, using light energy to abstract electrons from H(2)O, generating a proton gradient subsequently used for ATP formation. The extrinsic proteins stabilize the structure of photosystem II oxygen-evolving complex (OEC), the ion environment of oxygen evolution and protect the OEC against heat-induced inactivation. The protein is Photosystem II extrinsic protein U of Prochlorococcus marinus (strain MIT 9313).